The chain runs to 619 residues: CREB-regulated transcription coactivator 3 (619 aa).

A required for interaction with HTLV-1 TAX region spans residues 1-103; it reads MAASPGSGSA…LVERPSRNRF (103 aa). A phosphoserine mark is found at serine 4 and serine 62. The interval 103-150 is disordered; that stretch reads FHPLHRRSGDKPGRQFDGSAFGANYSSQPLDESWPRQQPPWKDEKHPG. Position 160 is a phosphothreonine (threonine 160). Serine 162 carries the post-translational modification Phosphoserine; by SIK2. The segment covering 165-175 has biased composition (polar residues); that stretch reads ALHTSALSTKP. The interval 165 to 185 is disordered; that stretch reads ALHTSALSTKPQDPYGGGGQS. A Glycyl lysine isopeptide (Lys-Gly) (interchain with G-Cter in SUMO2) cross-link involves residue lysine 232. Residues serine 273, serine 329, serine 332, serine 370, serine 391, serine 396, serine 410, and serine 443 each carry the phosphoserine modification. Positions 375–431 are disordered; that stretch reads STTNLSGPSRRRQPPVSPLTLSPGPEAHQGFSRQLSSTSPLAPYPTSQMVSSDRSQL. Residues 380–401 are required for interaction with PPP2CA and PPP2R1A; the sequence is SGPSRRRQPPVSPLTLSPGPEA. Over residues 405–431 the composition is skewed to polar residues; it reads FSRQLSSTSPLAPYPTSQMVSSDRSQL.

The protein belongs to the TORC family. As to quaternary structure, binding, as a tetramer, through its N-terminal region, with the bZIP domain of CREB1 enhances recruitment of TAF4 to the promoter. 'Arg-314' in the bZIP domain of CREB1 is essential for this interaction. Interacts (when phosphorylated at Ser-162 and Se-273) with 14-3-3 proteins. Interacts with YWHAE. Interacts (when phosphorylated at Ser-391) with phosphatase PP2A catalytic subunit PPP2CA and regulatory subunits PPP2R1A and PPP2R2A. Interacts, via the N-terminal with the ankyrin repeats of BCL3, to form a complex with CREB1 on CRE and TxRE responsive elements and represses HTLV-1 LTR-mediated transcription. (Microbial infection) Interacts with HTLV-1 protein Tax; this interaction enhances tax transcriptional activity. Phosphorylation/dephosphorylation states of Ser-273 are required for regulating transduction of CREB activity. CRTCs/TORCs are inactive when phosphorylated, and active when dephosphorylated at this site. May be phosphorylated at Ser-391 by MAPK3/ERK1 and/or MAPK1/ERK2 or by some cyclin-dependent kinases such as CDK1,CDK2 or CDK5. Following adenylyl cyclase activation, dephosphorylated at Ser-162 and Ser-273 resulting in its dissociation from 14-3-3 proteins probably promoting CRTC3 translocation into the nucleus. In terms of tissue distribution, predominantly expressed in B and T lymphocytes. Highest levels in lung. Also expressed in brain, colon, heart, kidney, ovary, and prostate. Weak expression in liver, pancreas, muscle, small intestine, spleen and stomach.

It localises to the nucleus. Its subcellular location is the cytoplasm. Functionally, transcriptional coactivator for CREB1 which activates transcription through both consensus and variant cAMP response element (CRE) sites. Acts as a coactivator, in the SIK/TORC signaling pathway, being active when dephosphorylated and acts independently of CREB1 'Ser-133' phosphorylation. Enhances the interaction of CREB1 with TAF4. Regulates the expression of specific CREB-activated genes such as the steroidogenic gene, StAR. Potent coactivator of PPARGC1A and inducer of mitochondrial biogenesis in muscle cells. Also coactivator for TAX activation of the human T-cell leukemia virus type 1 (HTLV-1) long terminal repeats (LTR). The sequence is that of CREB-regulated transcription coactivator 3 (CRTC3) from Homo sapiens (Human).